Here is a 557-residue protein sequence, read N- to C-terminus: Probable asparagine synthetase [glutamine-hydrolyzing] (557 aa).

The active-site For GATase activity is the Cys2. One can recognise a Glutamine amidotransferase type-2 domain in the interval 2 to 188 (CGILAILNSL…PGHYFSSKTK (187 aa)). Residues 50 to 54 (RLAIV), 75 to 77 (NGE), and Asp101 each bind L-glutamine. An Asparagine synthetase domain is found at 217–466 (AIKEAFEQAV…LPSSVLWRQK (250 aa)). ATP is bound by residues Leu239, Ile279, and 353–354 (SG). A disordered region spans residues 538-557 (WGASQDPSGRAQKVHLSTTE).

The enzyme catalyses L-aspartate + L-glutamine + ATP + H2O = L-asparagine + L-glutamate + AMP + diphosphate + H(+). It participates in amino-acid biosynthesis; L-asparagine biosynthesis; L-asparagine from L-aspartate (L-Gln route): step 1/1. This chain is Probable asparagine synthetase [glutamine-hydrolyzing] (asns), found in Dictyostelium discoideum (Social amoeba).